The primary structure comprises 290 residues: ATP synthase gamma chain (290 aa).

This sequence belongs to the ATPase gamma chain family. In terms of assembly, F-type ATPases have 2 components, CF(1) - the catalytic core - and CF(0) - the membrane proton channel. CF(1) has five subunits: alpha(3), beta(3), gamma(1), delta(1), epsilon(1). CF(0) has three main subunits: a, b and c.

The protein localises to the cell membrane. In terms of biological role, produces ATP from ADP in the presence of a proton gradient across the membrane. The gamma chain is believed to be important in regulating ATPase activity and the flow of protons through the CF(0) complex. This is ATP synthase gamma chain from Buchnera aphidicola subsp. Diuraphis noxia.